Reading from the N-terminus, the 141-residue chain is ATP synthase epsilon chain (141 aa).

This sequence belongs to the ATPase epsilon chain family. F-type ATPases have 2 components, CF(1) - the catalytic core - and CF(0) - the membrane proton channel. CF(1) has five subunits: alpha(3), beta(3), gamma(1), delta(1), epsilon(1). CF(0) has three main subunits: a, b and c.

It is found in the cell inner membrane. Its function is as follows. Produces ATP from ADP in the presence of a proton gradient across the membrane. The chain is ATP synthase epsilon chain from Pseudomonas aeruginosa (strain LESB58).